Consider the following 88-residue polypeptide: Small cysteine-rich outer membrane protein OmcA (88 aa).

A signal peptide spans 1–18; sequence MKKTALLAALCSVVSLSS. Cys-19 carries N-palmitoyl cysteine lipidation. Cys-19 carries the S-diacylglycerol cysteine lipid modification.

Part of a disulfide cross-linked outer membrane complex (COMC) composed of the major outer membrane porin (MOMP), the small cysteine-rich protein (OmcA) and the large cysteine-rich periplasmic protein (OmcB).

Its subcellular location is the cell outer membrane. Functionally, in elementary bodies (EBs, the infectious stage, which is able to survive outside the host cell) provides the structural integrity of the outer envelope through disulfide cross-links with the large cysteine-rich periplasmic protein and the major outer membrane porin. It has been described in publications as the Sarkosyl-insoluble COMC (Chlamydia outer membrane complex), and serves as the functional equivalent of peptidoglycan. The chain is Small cysteine-rich outer membrane protein OmcA (omcA) from Chlamydia trachomatis serovar B (strain Jali20/OT).